We begin with the raw amino-acid sequence, 420 residues long: UDP-N-acetylmuramoylalanine--D-glutamate ligase (420 aa).

109–115 lines the ATP pocket; it reads GSAGKTT.

This sequence belongs to the MurCDEF family.

The protein localises to the cytoplasm. The enzyme catalyses UDP-N-acetyl-alpha-D-muramoyl-L-alanine + D-glutamate + ATP = UDP-N-acetyl-alpha-D-muramoyl-L-alanyl-D-glutamate + ADP + phosphate + H(+). It participates in cell wall biogenesis; peptidoglycan biosynthesis. Functionally, cell wall formation. Catalyzes the addition of glutamate to the nucleotide precursor UDP-N-acetylmuramoyl-L-alanine (UMA). In Chlamydia abortus (strain DSM 27085 / S26/3) (Chlamydophila abortus), this protein is UDP-N-acetylmuramoylalanine--D-glutamate ligase.